The chain runs to 183 residues: Ribosome-recycling factor (183 aa).

The protein belongs to the RRF family.

Its subcellular location is the cytoplasm. Responsible for the release of ribosomes from messenger RNA at the termination of protein biosynthesis. May increase the efficiency of translation by recycling ribosomes from one round of translation to another. In Treponema pallidum (strain Nichols), this protein is Ribosome-recycling factor.